A 374-amino-acid polypeptide reads, in one-letter code: Flap endonuclease 1 (374 aa).

The N-domain stretch occupies residues 1–105; that stretch reads MGVKGLNKLI…GELEKRLLRR (105 aa). A Mg(2+)-binding site is contributed by D34. Residues R47 and R71 each contribute to the DNA site. Residues D87, E159, E161, D180, and D182 each coordinate Mg(2+). The I-domain stretch occupies residues 123–254; it reads DHLKFEKRLV…VTAYKLIKEH (132 aa). E159 is a DNA binding site. The DNA site is built by G232 and D234. Residue D234 participates in Mg(2+) binding. Residues 339–347 are interaction with PCNA; the sequence is VQGRLDSFF. The tract at residues 353–374 is disordered; it reads DDGKDKKRKSTAKDTKSKKQKK.

This sequence belongs to the XPG/RAD2 endonuclease family. FEN1 subfamily. In terms of assembly, interacts with PCNA. Three molecules of RAD27 bind to one PCNA trimer with each molecule binding to one PCNA monomer. PCNA stimulates the nuclease activity without altering cleavage specificity. The cofactor is Mg(2+). Phosphorylated. Phosphorylation upon DNA damage induces relocalization to the nuclear plasma.

Its subcellular location is the nucleus. The protein resides in the nucleolus. It is found in the nucleoplasm. It localises to the mitochondrion. Structure-specific nuclease with 5'-flap endonuclease and 5'-3' exonuclease activities involved in DNA replication and repair. During DNA replication, cleaves the 5'-overhanging flap structure that is generated by displacement synthesis when DNA polymerase encounters the 5'-end of a downstream Okazaki fragment. It enters the flap from the 5'-end and then tracks to cleave the flap base, leaving a nick for ligation. Also involved in the long patch base excision repair (LP-BER) pathway, by cleaving within the apurinic/apyrimidinic (AP) site-terminated flap. Acts as a genome stabilization factor that prevents flaps from equilibrating into structures that lead to duplications and deletions. Also possesses 5'-3' exonuclease activity on nicked or gapped double-stranded DNA, and exhibits RNase H activity. Also involved in replication and repair of rDNA and in repairing mitochondrial DNA. This is Flap endonuclease 1 from Candida tropicalis (strain ATCC MYA-3404 / T1) (Yeast).